The primary structure comprises 296 residues: Transposase for insertion sequence element IS629 (296 aa).

The region spanning 125 to 285 is the Integrase catalytic domain; sequence VAERPDQLWV…TPPAEAEKAY (161 aa).

Involved in the transposition of the insertion sequence. The protein is Transposase for insertion sequence element IS629 of Shigella sonnei.